Here is a 200-residue protein sequence, read N- to C-terminus: Translation machinery-associated protein 22 (200 aa).

Residues 95–166 (VVIRREARTK…EVEAYIHSLL (72 aa)) form the SUI1 domain.

Belongs to the DENR family. In terms of assembly, interacts with the 40S ribosomal subunit.

The protein resides in the cytoplasm. This Kluyveromyces lactis (strain ATCC 8585 / CBS 2359 / DSM 70799 / NBRC 1267 / NRRL Y-1140 / WM37) (Yeast) protein is Translation machinery-associated protein 22 (TMA22).